The primary structure comprises 103 residues: Histone H4 (103 aa).

The segment covering 1–14 (MSGRGKGGKGLGKG) has biased composition (gly residues). Residues 1-20 (MSGRGKGGKGLGKGGAKRHR) are disordered. The residue at position 2 (serine 2) is an N-acetylserine. Residues lysine 6 and lysine 13 each carry the N6-acetyl-N6-methyllysine; alternate modification. N6-acetyllysine is present on lysine 17. The DNA-binding element occupies 17–21 (KRHRK). Lysine 21 is modified (N6-methyllysine).

Belongs to the histone H4 family. As to quaternary structure, the nucleosome is a histone octamer containing two molecules each of H2A, H2B, H3 and H4 assembled in one H3-H4 heterotetramer and two H2A-H2B heterodimers. The octamer wraps approximately 147 bp of DNA.

The protein resides in the nucleus. Its subcellular location is the chromosome. Its function is as follows. Core component of nucleosome. Nucleosomes wrap and compact DNA into chromatin, limiting DNA accessibility to the cellular machineries which require DNA as a template. Histones thereby play a central role in transcription regulation, DNA repair, DNA replication and chromosomal stability. DNA accessibility is regulated via a complex set of post-translational modifications of histones, also called histone code, and nucleosome remodeling. The chain is Histone H4 (H4DEKL) from Dendronephthya klunzingeri (Klunzinger's soft coral).